A 219-amino-acid polypeptide reads, in one-letter code: Apoptosis regulator OPG045 (219 aa).

It belongs to the orthopoxvirus OPG045 family. As to quaternary structure, homodimer. Interacts with host pro-apoptotic protein BCL2L11 (via BH3 domain). Interacts with host NLRP1. Interacts with host BAK.

It is found in the host mitochondrion outer membrane. It localises to the host cytoplasm. Plays a role in evading host innate immune response by inhibiting host inflammasome activation. Interacts with and inhibits NLR-mediated interleukin-1 beta/IL1B production in infected cells. At the host mitochondria outer membrane, interacts with the BH3 domain of host BAK and prevents BAK from binding active BAX. In turn, host apoptosis is inhibited. This is Apoptosis regulator OPG045 (OPG045) from Cynomys gunnisoni (Gunnison's prairie dog).